A 215-amino-acid chain; its full sequence is Pyridoxine/pyridoxamine 5'-phosphate oxidase (215 aa).

Substrate is bound by residues 9-12 (RRDY) and Lys-69. FMN-binding positions include 64 to 69 (RVLLLK), 79 to 80 (FT), Lys-86, and Gln-108. Positions 126, 130, and 134 each coordinate substrate. Residues 143–144 (QS) and Trp-188 each bind FMN. 194-196 (RLH) is a substrate binding site. Arg-198 provides a ligand contact to FMN.

It belongs to the pyridoxamine 5'-phosphate oxidase family. In terms of assembly, homodimer. Requires FMN as cofactor.

It catalyses the reaction pyridoxamine 5'-phosphate + O2 + H2O = pyridoxal 5'-phosphate + H2O2 + NH4(+). The enzyme catalyses pyridoxine 5'-phosphate + O2 = pyridoxal 5'-phosphate + H2O2. The protein operates within cofactor metabolism; pyridoxal 5'-phosphate salvage; pyridoxal 5'-phosphate from pyridoxamine 5'-phosphate: step 1/1. It functions in the pathway cofactor metabolism; pyridoxal 5'-phosphate salvage; pyridoxal 5'-phosphate from pyridoxine 5'-phosphate: step 1/1. In terms of biological role, catalyzes the oxidation of either pyridoxine 5'-phosphate (PNP) or pyridoxamine 5'-phosphate (PMP) into pyridoxal 5'-phosphate (PLP). This is Pyridoxine/pyridoxamine 5'-phosphate oxidase from Pseudomonas putida (strain W619).